The chain runs to 601 residues: Alpha-terpineol synthase, chloroplastic (601 aa).

The transit peptide at 1–47 (MSTISIHHVGILRNPLHSKSKRASINKPWSLSLPRSSSASRLVEPCR) directs the protein to the chloroplast. 2 residues coordinate Mn(2+): Asp357 and Asp361. The DDXXD motif signature appears at 357 to 361 (DDVYD). 2 homodimerization regions span residues 363 to 369 (YGTLDEL) and 435 to 471 (EAEW…ELSL). Mn(2+) contacts are provided by Asp499 and Glu507.

The protein belongs to the terpene synthase family. As to quaternary structure, homodimer. It depends on Mn(2+) as a cofactor. The cofactor is Mg(2+).

It is found in the plastid. It localises to the chloroplast. The enzyme catalyses (2E)-geranyl diphosphate + H2O = (S)-alpha-terpineol + diphosphate. It carries out the reaction (2E)-geranyl diphosphate + H2O = (R)-alpha-terpineol + diphosphate. Its pathway is secondary metabolite biosynthesis; terpenoid biosynthesis. Functionally, involved in the biosynthesis of phenolic monoterpenes natural products. Monoterpene synthase which catalyzes the conversion of geranyl diphosphate (GPP) to alpha-terpineol (isomer is not determined). This is Alpha-terpineol synthase, chloroplastic from Thymus caespititius (Cretan thyme).